We begin with the raw amino-acid sequence, 141 residues long: Galactose-6-phosphate isomerase subunit LacA (141 aa).

The protein belongs to the LacAB/RpiB family. Heteromultimeric protein consisting of LacA and LacB.

The catalysed reaction is aldehydo-D-galactose 6-phosphate = keto-D-tagatose 6-phosphate. Its pathway is carbohydrate metabolism; D-galactose 6-phosphate degradation; D-tagatose 6-phosphate from D-galactose 6-phosphate: step 1/1. The polypeptide is Galactose-6-phosphate isomerase subunit LacA (Streptococcus pneumoniae (strain P1031)).